We begin with the raw amino-acid sequence, 502 residues long: D-alanine--D-alanyl carrier protein ligase (502 aa).

Residue 150–151 participates in ATP binding; the sequence is TS. Aspartate 195 contributes to the D-alanine binding site. 290 to 295 contributes to the ATP binding site; sequence NTYGPT. Valine 299 is a D-alanine binding site. Residues aspartate 381 and lysine 490 each contribute to the ATP site. Residue lysine 490 coordinates D-alanine.

The protein belongs to the ATP-dependent AMP-binding enzyme family. DltA subfamily.

It is found in the cytoplasm. It catalyses the reaction holo-[D-alanyl-carrier protein] + D-alanine + ATP = D-alanyl-[D-alanyl-carrier protein] + AMP + diphosphate. It participates in cell wall biogenesis; lipoteichoic acid biosynthesis. In terms of biological role, catalyzes the first step in the D-alanylation of lipoteichoic acid (LTA), the activation of D-alanine and its transfer onto the D-alanyl carrier protein (Dcp) DltC. In an ATP-dependent two-step reaction, forms a high energy D-alanyl-AMP intermediate, followed by transfer of the D-alanyl residue as a thiol ester to the phosphopantheinyl prosthetic group of the Dcp. D-alanylation of LTA plays an important role in modulating the properties of the cell wall in Gram-positive bacteria, influencing the net charge of the cell wall. This Bacillus licheniformis (strain ATCC 14580 / DSM 13 / JCM 2505 / CCUG 7422 / NBRC 12200 / NCIMB 9375 / NCTC 10341 / NRRL NRS-1264 / Gibson 46) protein is D-alanine--D-alanyl carrier protein ligase.